Consider the following 367-residue polypeptide: Glutamate 5-kinase (367 aa).

Residue K10 participates in ATP binding. Substrate contacts are provided by S50, D137, and N149. ATP-binding positions include 169–170 (TD) and 211–217 (TGGMSTK). Residues 275–353 (AGEITVDEGA…QEIDAILGYE (79 aa)) form the PUA domain.

This sequence belongs to the glutamate 5-kinase family.

The protein resides in the cytoplasm. It catalyses the reaction L-glutamate + ATP = L-glutamyl 5-phosphate + ADP. It participates in amino-acid biosynthesis; L-proline biosynthesis; L-glutamate 5-semialdehyde from L-glutamate: step 1/2. Functionally, catalyzes the transfer of a phosphate group to glutamate to form L-glutamate 5-phosphate. The sequence is that of Glutamate 5-kinase from Escherichia coli O81 (strain ED1a).